A 257-amino-acid polypeptide reads, in one-letter code: Uracil phosphoribosyltransferase (257 aa).

5-phospho-alpha-D-ribose 1-diphosphate-binding positions include arginine 77, arginine 102, and 129-137 (DPMLATGGS). Residues isoleucine 192 and 197-199 (GDA) each bind uracil. Aspartate 198 serves as a coordination point for 5-phospho-alpha-D-ribose 1-diphosphate. Positions 203-257 (QFGPNLFTSSAPSRPEAPAGRGRAAAKTPGRRSARSESPSSTSPSARSRKAAPPA) are disordered. Composition is skewed to low complexity over residues 211-230 (SSAP…AAKT) and 238-248 (SESPSSTSPSA).

This sequence belongs to the UPRTase family. Requires Mg(2+) as cofactor.

The enzyme catalyses UMP + diphosphate = 5-phospho-alpha-D-ribose 1-diphosphate + uracil. Its pathway is pyrimidine metabolism; UMP biosynthesis via salvage pathway; UMP from uracil: step 1/1. With respect to regulation, allosterically activated by GTP. Its function is as follows. Catalyzes the conversion of uracil and 5-phospho-alpha-D-ribose 1-diphosphate (PRPP) to UMP and diphosphate. This is Uracil phosphoribosyltransferase from Mycolicibacterium paratuberculosis (strain ATCC BAA-968 / K-10) (Mycobacterium paratuberculosis).